A 56-amino-acid chain; its full sequence is Metallothionein (56 aa).

Zn(2+) contacts are provided by Cys-9, Cys-11, Cys-14, Cys-16, Cys-32, Cys-36, His-40, Cys-47, His-49, Cys-52, and Cys-54.

It belongs to the metallothionein superfamily. Type 14 family.

May play a role in essential metal ion homeostasis (especially zinc homeostasis) and resistance to certain non-essential metal ions. Binds four zinc ions. In Synechococcus elongatus (strain ATCC 33912 / PCC 7942 / FACHB-805) (Anacystis nidulans R2), this protein is Metallothionein (smtA).